We begin with the raw amino-acid sequence, 287 residues long: Hydroxysteroid 11-beta-dehydrogenase 1-like protein (287 aa).

A signal peptide spans 1 to 15 (MKVLLLTGLGALFFA). NADP(+)-binding positions include 36–62 (GVSA…TAHT), 87–88 (DM), and 114–116 (NHL). S165 serves as a coordination point for substrate. The active-site Proton acceptor is Y178. Residues 178–182 (YSAAK) and 211–217 (GLRDRAS) each bind NADP(+). N280 carries an N-linked (GlcNAc...) asparagine glycan.

This sequence belongs to the short-chain dehydrogenases/reductases (SDR) family.

It localises to the secreted. It catalyses the reaction cortisone + NADPH + H(+) = cortisol + NADP(+). Its function is as follows. Unidirectional NADP(+)-dependent cortisol dehydrogenase (in vitro). This chain is Hydroxysteroid 11-beta-dehydrogenase 1-like protein (HSD11B1L), found in Bos taurus (Bovine).